Reading from the N-terminus, the 428-residue chain is 3-phosphoshikimate 1-carboxyvinyltransferase (428 aa).

3 residues coordinate 3-phosphoshikimate: lysine 19, serine 20, and arginine 24. Position 19 (lysine 19) interacts with phosphoenolpyruvate. Positions 91 and 119 each coordinate phosphoenolpyruvate. 4 residues coordinate 3-phosphoshikimate: serine 164, glutamine 166, aspartate 312, and lysine 339. Residue glutamine 166 coordinates phosphoenolpyruvate. Catalysis depends on aspartate 312, which acts as the Proton acceptor. 2 residues coordinate phosphoenolpyruvate: arginine 343 and arginine 386.

Belongs to the EPSP synthase family. In terms of assembly, monomer.

It localises to the cytoplasm. The catalysed reaction is 3-phosphoshikimate + phosphoenolpyruvate = 5-O-(1-carboxyvinyl)-3-phosphoshikimate + phosphate. Its pathway is metabolic intermediate biosynthesis; chorismate biosynthesis; chorismate from D-erythrose 4-phosphate and phosphoenolpyruvate: step 6/7. Functionally, catalyzes the transfer of the enolpyruvyl moiety of phosphoenolpyruvate (PEP) to the 5-hydroxyl of shikimate-3-phosphate (S3P) to produce enolpyruvyl shikimate-3-phosphate and inorganic phosphate. This chain is 3-phosphoshikimate 1-carboxyvinyltransferase, found in Bacillus velezensis (strain DSM 23117 / BGSC 10A6 / LMG 26770 / FZB42) (Bacillus amyloliquefaciens subsp. plantarum).